The following is a 185-amino-acid chain: MTDSIKKDAKARMGKSIESLRNELAKIRTGRAHTSLLDHVMVEYYGSDVPISQVANVNVEDARTLTVTPWEKTMVSKVEKAIMTSDLGLNPSSMGTVIRVPMPALTEERRRDLVKVVRGEAENARVAIRNIRRDANNALKALVKGKEISEDDERRAQDEIQKLTDSHIEEVDKVLAEKEKELMEV.

Belongs to the RRF family.

It localises to the cytoplasm. Responsible for the release of ribosomes from messenger RNA at the termination of protein biosynthesis. May increase the efficiency of translation by recycling ribosomes from one round of translation to another. This Thioalkalivibrio sulfidiphilus (strain HL-EbGR7) protein is Ribosome-recycling factor.